A 180-amino-acid polypeptide reads, in one-letter code: ATP synthase subunit delta (180 aa).

This sequence belongs to the ATPase delta chain family. As to quaternary structure, F-type ATPases have 2 components, F(1) - the catalytic core - and F(0) - the membrane proton channel. F(1) has five subunits: alpha(3), beta(3), gamma(1), delta(1), epsilon(1). CF(0) has four main subunits: a(1), b(1), b'(1) and c(10-14). The alpha and beta chains form an alternating ring which encloses part of the gamma chain. F(1) is attached to F(0) by a central stalk formed by the gamma and epsilon chains, while a peripheral stalk is formed by the delta, b and b' chains.

It is found in the cellular thylakoid membrane. Its function is as follows. F(1)F(0) ATP synthase produces ATP from ADP in the presence of a proton or sodium gradient. F-type ATPases consist of two structural domains, F(1) containing the extramembraneous catalytic core and F(0) containing the membrane proton channel, linked together by a central stalk and a peripheral stalk. During catalysis, ATP synthesis in the catalytic domain of F(1) is coupled via a rotary mechanism of the central stalk subunits to proton translocation. In terms of biological role, this protein is part of the stalk that links CF(0) to CF(1). It either transmits conformational changes from CF(0) to CF(1) or is implicated in proton conduction. The chain is ATP synthase subunit delta from Prochlorococcus marinus (strain MIT 9312).